Here is a 746-residue protein sequence, read N- to C-terminus: Iron-sulfur clusters transporter ABCB7, mitochondrial (746 aa).

The N-terminal 19 residues, 1 to 19 (MAPMLVSLNCGIRVQRRTL), are a transit peptide targeting the mitochondrion. Topologically, residues 20 to 133 (TLLIRQTSSY…KDRPDLRARV (114 aa)) are mitochondrial matrix. In terms of domain architecture, ABC transmembrane type-1 spans 133-429 (VAVSLGLLAG…LGTVYRETRQ (297 aa)). The chain crosses the membrane as a helical span at residues 134–154 (AVSLGLLAGAKLTNVMVPFMF). At 155 to 176 (KYAVDELNQMSGHMLNLNDAPS) the chain is on the mitochondrial intermembrane side. The chain crosses the membrane as a helical span at residues 177–199 (TVATMTTAVLIGYGVSRAGSALF). Topologically, residues 200–252 (NELRNTVFGKVAQSSIRRIAKNVFLHLHNLDLGFHLSRQTGALSKAIDRGTRG) are mitochondrial matrix. Residues 253–273 (ISFVLSALVFNLGPTVFEMFL) form a helical membrane-spanning segment. Over 274–283 (VSAILYYKCG) the chain is Mitochondrial intermembrane. Residues 284 to 304 (GEFAAVALGTLSAYTIFTILV) traverse the membrane as a helical segment. At 305–375 (TQWRTRFRIE…TLAMLNFGQS (71 aa)) the chain is on the mitochondrial matrix side. Glutathione is bound by residues 308 to 312 (RTRFR) and 371 to 374 (NFGQ). Residues 376-396 (AIFSVGLTAIMLLASKGIAAG) form a helical membrane-spanning segment. At 397–402 (NMTVGD) the chain is on the mitochondrial intermembrane side. Residues 403 to 423 (LVMVNGLLFQLSLPLNFLGTV) form a helical membrane-spanning segment. Glycine 421 contacts glutathione. The Mitochondrial matrix segment spans residues 424–746 (YRETRQALID…SVKGCGNCSC (323 aa)). One can recognise an ABC transporter domain in the interval 465–699 (IRFEDVYFEY…PGSLYAELWN (235 aa)). ATP-binding positions include tyrosine 474 and 498-505 (GGSGSGKS). Residues 708 to 728 (SRKSSSAPAAERLSQKEEERK) form a disordered region.

This sequence belongs to the ABC transporter superfamily. ABCB family. Heavy Metal importer (TC 3.A.1.210) subfamily. Homodimer.

Its subcellular location is the mitochondrion inner membrane. The protein localises to the mitochondrion. The enzyme catalyses (glutathione)4[2Fe(III)-2S] cluster(in) + ATP + H2O = (glutathione)4[2Fe(III)-2S] cluster(out) + ADP + phosphate + H(+). Functionally, exports glutathione-coordinated iron-sulfur clusters such as [2Fe-2S]-(GS)4 cluster from the mitochondria to the cytosol in an ATP-dependent manner allowing the assembly of the cytosolic iron-sulfur (Fe/S) cluster-containing proteins and participates in iron homeostasis. May play a role in iron and lipid metabolism. The sequence is that of Iron-sulfur clusters transporter ABCB7, mitochondrial from Oryzias latipes (Japanese rice fish).